The following is a 37-amino-acid chain: Serrulin (37 aa).

The interval phenylalanine 16–glycine 37 is disordered. Lysine 36 is subject to Lysine amide.

Expressed in hemocytes (at protein level).

It is found in the secreted. Functionally, antimicrobial protein with activity against Gram-positive and Gram-negative bacteria, filamentous fungus, and yeast. Was tested against Micrococcus luteus A270 (MIC=0.5-1 uM), Echerichia coli SBS 363 (MIC=9-16 uM), Pseudomonas aeruginosa (MIC=0.01-0.3 uM), Aspergillus niger (MIC=3-6 uM), and Candida albicans MDM8 (MIC=1.5-3 uM). Has no hemolytic activity against human erythrocytes. This is Serrulin from Tityus serrulatus (Brazilian scorpion).